Reading from the N-terminus, the 155-residue chain is Small ribosomal subunit protein uS7c (155 aa).

Belongs to the universal ribosomal protein uS7 family. As to quaternary structure, part of the 30S ribosomal subunit.

The protein localises to the plastid. Its subcellular location is the chloroplast. Functionally, one of the primary rRNA binding proteins, it binds directly to 16S rRNA where it nucleates assembly of the head domain of the 30S subunit. The protein is Small ribosomal subunit protein uS7c (rps7) of Saururus cernuus (Lizard's tail).